We begin with the raw amino-acid sequence, 224 residues long: Uracil phosphoribosyltransferase (224 aa).

Arginine 92 serves as a coordination point for 5-phospho-alpha-D-ribose 1-diphosphate. Position 109 (lysine 109) interacts with GTP. Residues arginine 117 and aspartate 145–threonine 153 contribute to the 5-phospho-alpha-D-ribose 1-diphosphate site. Uracil is bound by residues isoleucine 210 and glycine 215–alanine 217. Aspartate 216 lines the 5-phospho-alpha-D-ribose 1-diphosphate pocket.

This sequence belongs to the UPRTase family. Mg(2+) serves as cofactor.

The enzyme catalyses UMP + diphosphate = 5-phospho-alpha-D-ribose 1-diphosphate + uracil. It functions in the pathway pyrimidine metabolism; UMP biosynthesis via salvage pathway; UMP from uracil: step 1/1. With respect to regulation, allosterically activated by GTP. Its function is as follows. Catalyzes the conversion of uracil and 5-phospho-alpha-D-ribose 1-diphosphate (PRPP) to UMP and diphosphate. This is Uracil phosphoribosyltransferase (UPP) from Nicotiana tabacum (Common tobacco).